The primary structure comprises 177 residues: 2''-aminoglycoside nucleotidyltransferase (177 aa).

The Mg(2+) site is built by D44, D46, and D86. D86 (proton acceptor) is an active-site residue.

The cofactor is Mg(2+).

The catalysed reaction is nucleoside triphosphate + gentamicin = diphosphate + 2''-nucleotidylgentamicin.. Its function is as follows. Mediates bacterial resistance to kanamycin, gentamicin, dibekacin, sisomicin, neomycin and tobramycin by adenylating the 2''-hydroxyl group of these antibiotics. The polypeptide is 2''-aminoglycoside nucleotidyltransferase (aadB) (Klebsiella pneumoniae).